Here is a 492-residue protein sequence, read N- to C-terminus: Cell division protein FtsA (492 aa).

Disordered stretches follow at residues Gly-288 to Glu-307 and Tyr-429 to Ser-458. A compositionally biased stretch (polar residues) spans Thr-291–Ser-303. A compositionally biased stretch (low complexity) spans Ser-436–Thr-447.

Belongs to the FtsA/MreB family. In terms of assembly, self-interacts. Interacts with FtsZ.

It is found in the cell inner membrane. Its function is as follows. Cell division protein that is involved in the assembly of the Z ring. May serve as a membrane anchor for the Z ring. The polypeptide is Cell division protein FtsA (Helicobacter pylori (strain ATCC 700392 / 26695) (Campylobacter pylori)).